Consider the following 231-residue polypeptide: Small ribosomal subunit protein uS3 (231 aa).

The KH type-2 domain occupies 39–108 (IKNYIKKRYK…EISISVLEVK (70 aa)).

This sequence belongs to the universal ribosomal protein uS3 family. As to quaternary structure, part of the 30S ribosomal subunit. Forms a tight complex with proteins S10 and S14.

Functionally, binds the lower part of the 30S subunit head. Binds mRNA in the 70S ribosome, positioning it for translation. This chain is Small ribosomal subunit protein uS3, found in Aquifex pyrophilus.